The following is a 121-amino-acid chain: Prefoldin subunit beta (121 aa).

Belongs to the prefoldin subunit beta family. Heterohexamer of two alpha and four beta subunits.

It localises to the cytoplasm. Molecular chaperone capable of stabilizing a range of proteins. Seems to fulfill an ATP-independent, HSP70-like function in archaeal de novo protein folding. The chain is Prefoldin subunit beta (pfdB) from Methanothermobacter thermautotrophicus (strain ATCC 29096 / DSM 1053 / JCM 10044 / NBRC 100330 / Delta H) (Methanobacterium thermoautotrophicum).